Here is a 409-residue protein sequence, read N- to C-terminus: Peptidase T (409 aa).

Zn(2+) is bound at residue H78. The active site involves D80. D140 is a Zn(2+) binding site. The Proton acceptor role is filled by E173. Residues E174, D196, and H379 each coordinate Zn(2+).

The protein belongs to the peptidase M20B family. It depends on Zn(2+) as a cofactor.

It localises to the cytoplasm. It catalyses the reaction Release of the N-terminal residue from a tripeptide.. In terms of biological role, cleaves the N-terminal amino acid of tripeptides. The sequence is that of Peptidase T from Salmonella choleraesuis (strain SC-B67).